The chain runs to 412 residues: Class E basic helix-loop-helix protein 40 (412 aa).

The essential for interaction with BMAL1, E-box binding and repressor activity against the CLOCK-BMAL1 heterodimer stretch occupies residues 1-139 (MERIPSAQPP…LSGRNVETGQ (139 aa)). The region spanning 52 to 107 (TYKLPHRLIEKKRRDRINECIAQLKDLLPEHLKLTTLGHLEKAVVLELTLKHVKAL) is the bHLH domain. The necessary for interaction with RXRA and repressor activity against RXRA stretch occupies residues 75–79 (LKDLL). In terms of domain architecture, Orange spans 142–175 (FCSGFQTCAREVLQYLAKHENTRDLKSSQLVTHL). Lys-159 is covalently cross-linked (Glycyl lysine isopeptide (Lys-Gly) (interchain with G-Cter in SUMO1, SUMO2 and SUMO3)). Lys-167 is covalently cross-linked (Glycyl lysine isopeptide (Lys-Gly) (interchain with G-Cter in SUMO2)). The disordered stretch occupies residues 182–303 (LLQGGTSRKP…LSDDEGHFTS (122 aa)). The residue at position 235 (Ser-235) is a Phosphoserine. Over residues 248 to 271 (ESEKGDLRSEQPCFKSDHGRRFTM) the composition is skewed to basic and acidic residues. Lys-279 is covalently cross-linked (Glycyl lysine isopeptide (Lys-Gly) (interchain with G-Cter in SUMO1); alternate). Lys-279 is covalently cross-linked (Glycyl lysine isopeptide (Lys-Gly) (interchain with G-Cter in SUMO1, SUMO2 and SUMO3); alternate). Residue Lys-279 forms a Glycyl lysine isopeptide (Lys-Gly) (interchain with G-Cter in SUMO2); alternate linkage. A Glycyl lysine isopeptide (Lys-Gly) (interchain with G-Cter in SUMO2) cross-link involves residue Lys-288. Ser-383 is subject to Phosphoserine.

In terms of assembly, homodimer. Heterodimer with BHLHE41/DEC2. Interacts with TCF3/E47. Interacts with ubiquitin-conjugating enzyme UBE2I/UBC9. Interacts with HDAC1, SUMO1, RXRA and BMAL1. Ubiquitinated; which may lead to proteasomal degradation. Post-translationally, sumoylation inhibits its ubiquitination and promotes its negative regulation of the CLOCK-BMAL1 heterodimer transcriptional activator activity. As to expression, expressed in cartilage, spleen, intestine, lung, and to a lesser extent in heart, brain, liver, muscle and stomach.

The protein localises to the cytoplasm. The protein resides in the nucleus. Functionally, transcriptional repressor involved in the regulation of the circadian rhythm by negatively regulating the activity of the clock genes and clock-controlled genes. Acts as the negative limb of a novel autoregulatory feedback loop (DEC loop) which differs from the one formed by the PER and CRY transcriptional repressors (PER/CRY loop). Both these loops are interlocked as it represses the expression of PER1/2 and in turn is repressed by PER1/2 and CRY1/2. Represses the activity of the circadian transcriptional activator: CLOCK-BMAL1|BMAL2 heterodimer by competing for the binding to E-box elements (5'-CACGTG-3') found within the promoters of its target genes. Negatively regulates its own expression and the expression of DBP and BHLHE41/DEC2. Acts as a corepressor of RXR and the RXR-LXR heterodimers and represses the ligand-induced RXRA and NR1H3/LXRA transactivation activity. May be involved in the regulation of chondrocyte differentiation via the cAMP pathway. Represses the transcription of NR0B2 and attentuates the transactivation of NR0B2 by the CLOCK-BMAL1 complex. Drives the circadian rhythm of blood pressure through transcriptional repression of ATP1B1 in the cardiovascular system. The chain is Class E basic helix-loop-helix protein 40 (BHLHE40) from Homo sapiens (Human).